The sequence spans 684 residues: Histone-lysine N-methyltransferase SETMAR (684 aa).

Residues 1–345 form a histone-lysine N-methyltransferase region; that stretch reads MFAEAAKTTR…RLTLETMKMM (345 aa). One can recognise a Pre-SET domain in the interval 73–136; that stretch reads PGCICVKTPC…HCRNRVVQKG (64 aa). Zn(2+)-binding residues include C75, C77, C82, C87, C89, C118, C122, C124, and C128. An SET domain is found at 139-263; it reads FHFQVFKTHK…PEEELSYDYS (125 aa). Residues 149-151, Y192, R220, and 223-224 contribute to the S-adenosyl-L-methionine site; these read KGW and NH. The Zn(2+) site is built by C226, C287, C289, and C294. A Post-SET domain is found at 283–299; it reads LRKPCYCGAKSCTAFLP. Residues 346–684 are mariner transposase Hsmar1; the sequence is LDKKQIRAIF…CVDCNGSYFD (339 aa). 2 DNA-binding regions (H-T-H motif) span residues 364–395 and 428–448; these read KAAE…KFCK and TTRE…RHLK. D496 serves as a coordination point for Mg(2+). K498 carries the N6-methyllysine modification. A Phosphoserine; by CHEK1 modification is found at S508. D588 contributes to the Mg(2+) binding site.

It in the N-terminal section; belongs to the class V-like SAM-binding methyltransferase superfamily. This sequence in the C-terminal section; belongs to the mariner transposase family. In terms of assembly, homodimer. Interacts with PRPF19; required for SETMAR recruitment to damaged DNA sites. Interacts with PCNA. Interacts with TOP2A; stimulates TOP2A topoisomerase activity. May interact with RAD9A and/or RAD9B. It depends on Mg(2+) as a cofactor. Methylated. Methylation regulates activity in DNA decatenation. Post-translationally, phosphorylated at Ser-508 by CHEK1 and dephosphorylated by protein phosphatase 2A/PP2A. Phosphorylation at Ser-508 is enhanced by DNA damage and promotes recruitment to damaged DNA. It stimulates DNA repair and impairs replication fork restart. Widely expressed, with highest expression in placenta and ovary and lowest expression in skeletal muscle.

Its subcellular location is the nucleus. The protein localises to the chromosome. It carries out the reaction L-lysyl(36)-[histone H3] + 2 S-adenosyl-L-methionine = N(6),N(6)-dimethyl-L-lysyl(36)-[histone H3] + 2 S-adenosyl-L-homocysteine + 2 H(+). Functionally, protein derived from the fusion of a methylase with the transposase of an Hsmar1 transposon that plays a role in DNA double-strand break repair, stalled replication fork restart and DNA integration. DNA-binding protein, it is indirectly recruited to sites of DNA damage through protein-protein interactions. Also has kept a sequence-specific DNA-binding activity recognizing the 19-mer core of the 5'-terminal inverted repeats (TIRs) of the Hsmar1 element and displays a DNA nicking and end joining activity. In parallel, has a histone methyltransferase activity and methylates 'Lys-4' and 'Lys-36' of histone H3. Specifically mediates dimethylation of H3 'Lys-36' at sites of DNA double-strand break and may recruit proteins required for efficient DSB repair through non-homologous end-joining. Also regulates replication fork processing, promoting replication fork restart and regulating DNA decatenation through stimulation of the topoisomerase activity of TOP2A. The protein is Histone-lysine N-methyltransferase SETMAR of Homo sapiens (Human).